Here is a 439-residue protein sequence, read N- to C-terminus: Methylenetetrahydrofolate--tRNA-(uracil-5-)-methyltransferase TrmFO (439 aa).

7-12 serves as a coordination point for FAD; the sequence is GAGLAG.

The protein belongs to the MnmG family. TrmFO subfamily. Requires FAD as cofactor.

The protein localises to the cytoplasm. It carries out the reaction uridine(54) in tRNA + (6R)-5,10-methylene-5,6,7,8-tetrahydrofolate + NADH + H(+) = 5-methyluridine(54) in tRNA + (6S)-5,6,7,8-tetrahydrofolate + NAD(+). It catalyses the reaction uridine(54) in tRNA + (6R)-5,10-methylene-5,6,7,8-tetrahydrofolate + NADPH + H(+) = 5-methyluridine(54) in tRNA + (6S)-5,6,7,8-tetrahydrofolate + NADP(+). Catalyzes the folate-dependent formation of 5-methyl-uridine at position 54 (M-5-U54) in all tRNAs. The polypeptide is Methylenetetrahydrofolate--tRNA-(uracil-5-)-methyltransferase TrmFO (Heliobacterium modesticaldum (strain ATCC 51547 / Ice1)).